A 268-amino-acid chain; its full sequence is Tryptophan synthase alpha chain (268 aa).

Catalysis depends on proton acceptor residues Glu-49 and Asp-60.

The protein belongs to the TrpA family. In terms of assembly, tetramer of two alpha and two beta chains.

The catalysed reaction is (1S,2R)-1-C-(indol-3-yl)glycerol 3-phosphate + L-serine = D-glyceraldehyde 3-phosphate + L-tryptophan + H2O. It participates in amino-acid biosynthesis; L-tryptophan biosynthesis; L-tryptophan from chorismate: step 5/5. Functionally, the alpha subunit is responsible for the aldol cleavage of indoleglycerol phosphate to indole and glyceraldehyde 3-phosphate. The polypeptide is Tryptophan synthase alpha chain (Shigella boydii serotype 4 (strain Sb227)).